We begin with the raw amino-acid sequence, 2417 residues long: Protein pad-1 (2417 aa).

Disordered regions lie at residues 409–437 (SSNS…DREG), 449–475 (SNKD…PDEE), 994–1029 (TSTG…DDDT), and 1957–2032 (SMSN…RRDP). Composition is skewed to low complexity over residues 456-468 (TSVT…NASS) and 1002-1024 (DPSA…VVPA). The span at 1969 to 1982 (DNPSGSTRNSTLSL) shows a compositional bias: polar residues. Residues 2003–2014 (SKSENMKIEKKS) are compositionally biased toward basic and acidic residues. The segment covering 2015 to 2025 (SSNLRASIKDT) has biased composition (polar residues).

Belongs to the DOP1 family.

Its function is as follows. May be involved in protein traffic between late Golgi and early endosomes. Essential for cell patterning during gastrulation. The sequence is that of Protein pad-1 (pad-1) from Caenorhabditis elegans.